Here is a 478-residue protein sequence, read N- to C-terminus: Melanopsin (478 aa).

A compositionally biased stretch (pro residues) spans 1–14; the sequence is MNPPSGPRVPPSPT. Residues 1–32 are disordered; the sequence is MNPPSGPRVPPSPTQEPSCMATPAPPSWWDSS. Topologically, residues 1–72 are extracellular; it reads MNPPSGPRVP…VDVPDHAHYT (72 aa). Residues 73–93 form a helical membrane-spanning segment; that stretch reads LGTVILLVGLTGMLGNLTVIY. Residues 94–107 lie on the Cytoplasmic side of the membrane; the sequence is TFCRSRSLRTPANM. The helical transmembrane segment at 108–128 threads the bilayer; sequence FIINLAVSDFLMSFTQAPVFF. At 129 to 144 the chain is on the extracellular side; the sequence is TSSLYKQWLFGETGCE. Cysteines 143 and 221 form a disulfide. A helical transmembrane segment spans residues 145-165; sequence FYAFCGALFGISSMITLTAIA. Residues 166–188 are Cytoplasmic-facing; sequence LDRYLVITRPLATFGVASKRRAA. Residues 189–209 form a helical membrane-spanning segment; sequence FVLLGVWLYALAWSLPPFFGW. Topologically, residues 210–238 are extracellular; sequence SAYVPEGLLTSCSWDYMSFTPAVRAYTML. Residues 239 to 259 traverse the membrane as a helical segment; it reads LCCFVFFLPLLIIIYCYIFIF. Residues 260-296 lie on the Cytoplasmic side of the membrane; the sequence is RAIRETGRALQTFGACKGNGESLWQRQRLQSECKMAK. The helical transmembrane segment at 297–317 threads the bilayer; it reads IMLLVILLFVLSWAPYSAVAL. The Extracellular portion of the chain corresponds to 318–332; that stretch reads VAFAGYAHVLTPYMS. The chain crosses the membrane as a helical span at residues 333 to 353; that stretch reads SVPAVIAKASAIHNPIIYAIT. Lys340 is modified (N6-(retinylidene)lysine). Residues 354–478 are Cytoplasmic-facing; the sequence is HPKYRVAIAQ…GLIPSQDPRM (125 aa). Residues 440-478 form a disordered region; that stretch reads LYGQGLEDLEAKAPPRPQGHEAETPGKTKGLIPSQDPRM. The span at 448–465 shows a compositional bias: basic and acidic residues; that stretch reads LEAKAPPRPQGHEAETPG.

Belongs to the G-protein coupled receptor 1 family. Opsin subfamily. In terms of tissue distribution, expressed in the retina.

It localises to the cell membrane. Its subcellular location is the cell projection. It is found in the axon. The protein localises to the dendrite. The protein resides in the perikaryon. Photoreceptor that binds cis-retinaldehydes. Contributes to pupillar reflex, photoentrainment and other non-image forming responses to light. May be involved in the optokinetic visual tracking response. May be involved in the regulation of retinal hyaloid vessel growth and regression. In Homo sapiens (Human), this protein is Melanopsin (OPN4).